Here is a 396-residue protein sequence, read N- to C-terminus: Elongation factor Tu (396 aa).

Residues 10–206 (KPHVNVGTIG…ALDTYIPTPE (197 aa)) enclose the tr-type G domain. The tract at residues 19–26 (GHVDHGKT) is G1. GTP is bound at residue 19 to 26 (GHVDHGKT). Threonine 26 is a Mg(2+) binding site. The segment at 60–64 (GITIN) is G2. The tract at residues 81–84 (DCPG) is G3. GTP is bound by residues 81 to 85 (DCPGH) and 136 to 139 (NKCD). The interval 136 to 139 (NKCD) is G4. Residues 174-176 (SAK) are G5.

The protein belongs to the TRAFAC class translation factor GTPase superfamily. Classic translation factor GTPase family. EF-Tu/EF-1A subfamily. Monomer.

The protein localises to the cytoplasm. It carries out the reaction GTP + H2O = GDP + phosphate + H(+). GTP hydrolase that promotes the GTP-dependent binding of aminoacyl-tRNA to the A-site of ribosomes during protein biosynthesis. In Burkholderia cenocepacia (strain HI2424), this protein is Elongation factor Tu.